Reading from the N-terminus, the 150-residue chain is Protein-export protein SecB (150 aa).

It belongs to the SecB family. In terms of assembly, homotetramer, a dimer of dimers. One homotetramer interacts with 1 SecA dimer.

It is found in the cytoplasm. One of the proteins required for the normal export of preproteins out of the cell cytoplasm. It is a molecular chaperone that binds to a subset of precursor proteins, maintaining them in a translocation-competent state. It also specifically binds to its receptor SecA. In Chromobacterium violaceum (strain ATCC 12472 / DSM 30191 / JCM 1249 / CCUG 213 / NBRC 12614 / NCIMB 9131 / NCTC 9757 / MK), this protein is Protein-export protein SecB.